The following is a 348-amino-acid chain: Cyclic AMP-dependent transcription factor ATF-4 (348 aa).

A Glycyl lysine isopeptide (Lys-Gly) (interchain with G-Cter in SUMO2) cross-link involves residue lysine 53. 2 disordered regions span residues 151–174 (QGAP…TPDH) and 187–265 (PEGD…GEKM). Residues serine 211, serine 215, serine 220, serine 227, and serine 231 each carry the phosphoserine modification. The BetaTrCP degron motif signature appears at 211 to 220 (SDNDSGICMS). Over residues 221–241 (PDSSLGSPQDSPSTSRGSPNK) the composition is skewed to polar residues. Proline 232 is modified (4-hydroxyproline). Serine 242 and serine 245 each carry phosphoserine. Over residues 242–253 (SLLSPGALSGSS) the composition is skewed to low complexity. Glycyl lysine isopeptide (Lys-Gly) (interchain with G-Cter in SUMO2) cross-links involve residues lysine 256, lysine 264, and lysine 269. A bZIP domain is found at 275–338 (LDKKLKKMEQ…QYLKDQIEEV (64 aa)). A basic motif region spans residues 277-297 (KKLKKMEQNKTAATRYRQKKR). Residues 302–338 (ALTGECKELEKKNEALKEKADSLAKEIQYLKDQIEEV) are interaction with GABBR1. Residues 303–331 (LTGECKELEKKNEALKEKADSLAKEIQYL) form a leucine-zipper region. Lysine 308 carries the post-translational modification N6-acetyllysine.

This sequence belongs to the bZIP family. Binds DNA as a homodimer and as a heterodimer. Heterodimer; heterodimerizes with CEBPB. Heterodimer; heterodimerizes with DDIT3/CHOP. Interacts with CEP290 (via an N-terminal region). Interacts with NEK6, DAPK2 (isoform 2) and ZIPK/DAPK3. Interacts (via its leucine zipper domain) with GABBR1 and GABBR2 (via their C-termini). Forms a heterodimer with TXLNG in osteoblasts. Interacts (via its DNA binding domain) with FOXO1 (C-terminal half); the interaction occurs in osteoblasts and regulates glucose homeostasis through suppression of beta-cell proliferation and a decrease in insulin production. Interacts with SATB2; the interaction results in enhanced DNA binding and transactivation by these transcription factors. Interacts with ABRAXAS2. Interacts with TRIB3, inhibiting the transactivation activity of ATF4. Interacts with DISC1; which inhibits ATF4 transcription factor activity by disrupting ATF4 dimerization and DNA-binding. Interacts with EP300/p300; EP300/p300 stabilizes ATF4 and increases its transcriptional activity independently of its catalytic activity by preventing its ubiquitination. In terms of processing, ubiquitinated by SCF(BTRC) in response to mTORC1 signal, followed by proteasomal degradation and leading to down-regulate expression of SIRT4. Interaction with EP300/p300 inhibits ubiquitination by SCF(BTRC). Post-translationally, phosphorylation at Ser-242 by RPS6KA3/RSK2 in osteoblasts enhances transactivation activity and promotes osteoblast differentiation. Phosphorylated on the betaTrCP degron motif at Ser-215, followed by phosphorylation at Ser-220, Ser-227, Ser-231 and Ser-245, promoting interaction with BTRC and ubiquitination. Phosphorylation is promoted by mTORC1. Phosphorylation at Ser-211 by CK2 decreases its stability. Phosphorylated by NEK6. Hydroxylated by PHD3, leading to decreased protein stability.

The protein resides in the nucleus. Its subcellular location is the nucleus speckle. It localises to the cytoplasm. It is found in the cell membrane. The protein localises to the cytoskeleton. The protein resides in the microtubule organizing center. Its subcellular location is the centrosome. Its function is as follows. Transcription factor that binds the cAMP response element (CRE) (consensus: 5'-GTGACGT[AC][AG]-3') and displays two biological functions, as regulator of metabolic and redox processes under normal cellular conditions, and as master transcription factor during integrated stress response (ISR). Binds to asymmetric CRE's as a heterodimer and to palindromic CRE's as a homodimer. Core effector of the ISR, which is required for adaptation to various stress such as endoplasmic reticulum (ER) stress, amino acid starvation, mitochondrial stress or oxidative stress. During ISR, ATF4 translation is induced via an alternative ribosome translation re-initiation mechanism in response to EIF2S1/eIF-2-alpha phosphorylation, and stress-induced ATF4 acts as a master transcription factor of stress-responsive genes in order to promote cell recovery. Promotes the transcription of genes linked to amino acid sufficiency and resistance to oxidative stress to protect cells against metabolic consequences of ER oxidation. Activates the transcription of NLRP1, possibly in concert with other factors in response to ER stress. Activates the transcription of asparagine synthetase (ASNS) in response to amino acid deprivation or ER stress. However, when associated with DDIT3/CHOP, the transcriptional activation of the ASNS gene is inhibited in response to amino acid deprivation. Together with DDIT3/CHOP, mediates programmed cell death by promoting the expression of genes involved in cellular amino acid metabolic processes, mRNA translation and the terminal unfolded protein response (terminal UPR), a cellular response that elicits programmed cell death when ER stress is prolonged and unresolved. Activates the expression of COX7A2L/SCAF1 downstream of the EIF2AK3/PERK-mediated unfolded protein response, thereby promoting formation of respiratory chain supercomplexes and increasing mitochondrial oxidative phosphorylation. Together with DDIT3/CHOP, activates the transcription of the IRS-regulator TRIB3 and promotes ER stress-induced neuronal cell death by regulating the expression of BBC3/PUMA in response to ER stress. May cooperate with the UPR transcriptional regulator QRICH1 to regulate ER protein homeostasis which is critical for cell viability in response to ER stress. In the absence of stress, ATF4 translation is at low levels and it is required for normal metabolic processes such as embryonic lens formation, fetal liver hematopoiesis, bone development and synaptic plasticity. Acts as a regulator of osteoblast differentiation in response to phosphorylation by RPS6KA3/RSK2: phosphorylation in osteoblasts enhances transactivation activity and promotes expression of osteoblast-specific genes and post-transcriptionally regulates the synthesis of Type I collagen, the main constituent of the bone matrix. Cooperates with FOXO1 in osteoblasts to regulate glucose homeostasis through suppression of beta-cell production and decrease in insulin production. Activates transcription of SIRT4. Regulates the circadian expression of the core clock component PER2 and the serotonin transporter SLC6A4. Binds in a circadian time-dependent manner to the cAMP response elements (CRE) in the SLC6A4 and PER2 promoters and periodically activates the transcription of these genes. Mainly acts as a transcriptional activator in cellular stress adaptation, but it can also act as a transcriptional repressor: acts as a regulator of synaptic plasticity by repressing transcription, thereby inhibiting induction and maintenance of long-term memory. Regulates synaptic functions via interaction with DISC1 in neurons, which inhibits ATF4 transcription factor activity by disrupting ATF4 dimerization and DNA-binding. In Bos taurus (Bovine), this protein is Cyclic AMP-dependent transcription factor ATF-4.